A 1393-amino-acid chain; its full sequence is ABC transporter G family member 3 (1393 aa).

Residues 1 to 14 (MEDKNNIELQEKAP) show a composition bias toward basic and acidic residues. The tract at residues 1 to 68 (MEDKNNIELQ…IIYQNPTPAS (68 aa)) is disordered. Low complexity predominate over residues 15-50 (DNYNNNNNNNNNNNNNNNNNNNNNNNNNNNNNNDIN). The ABC transporter 1 domain maps to 100–353 (VSANNISYYI…YFSSIGLAPL (254 aa)). Residue 144 to 151 (GIPGAGKS) coordinates ATP. The ABC transmembrane type-2 1 domain occupies 473–698 (MQYAVRFFQA…SYADGGYQGN (226 aa)). 7 consecutive transmembrane segments (helical) span residues 479-499 (FFQAIFMGCVIGSLFVKMGFT), 509-529 (LVYFAMVLHIWTTIGSVEEFF), 558-578 (IPISLIEAILFSSCCYWIAGF), 585-605 (FIVFILGMALTNLIAQGIFQV), 615-635 (LASLICPAIVVLFMIMSGYMI), 640-660 (IPGWWIWLNALSPLRYVIDMV), and 724-744 (VDIVIILGFVCTFFFIFFLGV). Positions 783 to 1035 (MTFQNLNYVV…VIQHFTSAGY (253 aa)) constitute an ABC transporter 2 domain. An ATP-binding site is contributed by 828 to 835 (GPSGAGKS). One can recognise an ABC transmembrane type-2 2 domain in the interval 1121–1388 (QTILLRFLRS…FLGYLALRFI (268 aa)). A run of 6 helical transmembrane segments spans residues 1122 to 1142 (TILLRFLRSFIPAIVIGTLFL), 1157 to 1177 (LVFLGFLFGGMASIGKVPTIV), 1206 to 1226 (LPMMVLTAFSYWIPMFFLTGL), 1235 to 1255 (FFFSLSVYLLVIMCYDSLATL), 1265 to 1285 (IAILVSGVGLNFLGLFGGFFI), and 1364 to 1384 (FYNLIILGGYFCAYTFLGYLA).

It belongs to the ABC transporter superfamily. ABCG family. PDR (TC 3.A.1.205) subfamily.

The protein localises to the membrane. This Dictyostelium discoideum (Social amoeba) protein is ABC transporter G family member 3 (abcG3).